The following is a 467-amino-acid chain: Trigger factor (467 aa).

Residues 174–261 (SDIAILTFKG…LQDLKTRELP (88 aa)) form the PPIase FKBP-type domain. The disordered stretch occupies residues 439–467 (PKKALNEKVKSSKPKNTQKKTDKTKKDSP). Residues 457 to 467 (KKTDKTKKDSP) show a composition bias toward basic and acidic residues.

Belongs to the FKBP-type PPIase family. Tig subfamily.

It is found in the cytoplasm. The enzyme catalyses [protein]-peptidylproline (omega=180) = [protein]-peptidylproline (omega=0). In terms of biological role, involved in protein export. Acts as a chaperone by maintaining the newly synthesized protein in an open conformation. Functions as a peptidyl-prolyl cis-trans isomerase. In Prochlorococcus marinus (strain SARG / CCMP1375 / SS120), this protein is Trigger factor.